A 366-amino-acid chain; its full sequence is UDP-N-acetylglucosamine--N-acetylmuramyl-(pentapeptide) pyrophosphoryl-undecaprenol N-acetylglucosamine transferase (366 aa).

Residues 14–16 (TGG), asparagine 125, arginine 168, serine 196, and glutamine 297 contribute to the UDP-N-acetyl-alpha-D-glucosamine site.

This sequence belongs to the glycosyltransferase 28 family. MurG subfamily.

The protein resides in the cell inner membrane. The enzyme catalyses di-trans,octa-cis-undecaprenyl diphospho-N-acetyl-alpha-D-muramoyl-L-alanyl-D-glutamyl-meso-2,6-diaminopimeloyl-D-alanyl-D-alanine + UDP-N-acetyl-alpha-D-glucosamine = di-trans,octa-cis-undecaprenyl diphospho-[N-acetyl-alpha-D-glucosaminyl-(1-&gt;4)]-N-acetyl-alpha-D-muramoyl-L-alanyl-D-glutamyl-meso-2,6-diaminopimeloyl-D-alanyl-D-alanine + UDP + H(+). The protein operates within cell wall biogenesis; peptidoglycan biosynthesis. Functionally, cell wall formation. Catalyzes the transfer of a GlcNAc subunit on undecaprenyl-pyrophosphoryl-MurNAc-pentapeptide (lipid intermediate I) to form undecaprenyl-pyrophosphoryl-MurNAc-(pentapeptide)GlcNAc (lipid intermediate II). This Rhodopseudomonas palustris (strain BisB5) protein is UDP-N-acetylglucosamine--N-acetylmuramyl-(pentapeptide) pyrophosphoryl-undecaprenol N-acetylglucosamine transferase.